The primary structure comprises 442 residues: Chromosomal replication initiator protein DnaA (442 aa).

Residues Met-1–Arg-69 are domain I, interacts with DnaA modulators. The tract at residues Arg-69 to Ala-103 is domain II. The interval Ser-104–Val-320 is domain III, AAA+ region. Positions 148, 150, 151, and 152 each coordinate ATP. A domain IV, binds dsDNA region spans residues Ser-321–His-442.

The protein belongs to the DnaA family. In terms of assembly, oligomerizes as a right-handed, spiral filament on DNA at oriC.

It is found in the cytoplasm. In terms of biological role, plays an essential role in the initiation and regulation of chromosomal replication. ATP-DnaA binds to the origin of replication (oriC) to initiate formation of the DNA replication initiation complex once per cell cycle. Binds the DnaA box (a 9 base pair repeat at the origin) and separates the double-stranded (ds)DNA. Forms a right-handed helical filament on oriC DNA; dsDNA binds to the exterior of the filament while single-stranded (ss)DNA is stabiized in the filament's interior. The ATP-DnaA-oriC complex binds and stabilizes one strand of the AT-rich DNA unwinding element (DUE), permitting loading of DNA polymerase. After initiation quickly degrades to an ADP-DnaA complex that is not apt for DNA replication. Binds acidic phospholipids. This Gloeobacter violaceus (strain ATCC 29082 / PCC 7421) protein is Chromosomal replication initiator protein DnaA.